The chain runs to 108 residues: Nucleoid-associated protein Avin_19840 (108 aa).

This sequence belongs to the YbaB/EbfC family. As to quaternary structure, homodimer.

The protein resides in the cytoplasm. Its subcellular location is the nucleoid. In terms of biological role, binds to DNA and alters its conformation. May be involved in regulation of gene expression, nucleoid organization and DNA protection. The protein is Nucleoid-associated protein Avin_19840 of Azotobacter vinelandii (strain DJ / ATCC BAA-1303).